A 481-amino-acid polypeptide reads, in one-letter code: Argininosuccinate lyase (481 aa).

Belongs to the lyase 1 family. Argininosuccinate lyase subfamily.

The protein resides in the cytoplasm. The catalysed reaction is 2-(N(omega)-L-arginino)succinate = fumarate + L-arginine. Its pathway is amino-acid biosynthesis; L-arginine biosynthesis; L-arginine from L-ornithine and carbamoyl phosphate: step 3/3. The polypeptide is Argininosuccinate lyase (Methanococcus maripaludis (strain DSM 14266 / JCM 13030 / NBRC 101832 / S2 / LL)).